A 557-amino-acid chain; its full sequence is Formate--tetrahydrofolate ligase (557 aa).

Threonine 66–serine 73 lines the ATP pocket.

The protein belongs to the formate--tetrahydrofolate ligase family.

The catalysed reaction is (6S)-5,6,7,8-tetrahydrofolate + formate + ATP = (6R)-10-formyltetrahydrofolate + ADP + phosphate. It participates in one-carbon metabolism; tetrahydrofolate interconversion. The chain is Formate--tetrahydrofolate ligase from Clostridium botulinum (strain ATCC 19397 / Type A).